A 457-amino-acid polypeptide reads, in one-letter code: Nuclear hormone receptor family member nhr-20 (457 aa).

Residues 16 to 92 constitute a DNA-binding region (nuclear receptor); that stretch reads TSKCLVCEHP…AGMRRECVQK (77 aa). 2 NR C4-type zinc fingers span residues 19 to 40 and 56 to 80; these read CLVC…CLAC and CKKD…FDKC. Residues 125–182 are disordered; the sequence is GDQTDDNSPLSIEKKSPPGLLPNDSPMMADFKFDPSDIPSTSGGSTQRLERSPSPKLA. Residues 162-171 show a composition bias toward polar residues; sequence IPSTSGGSTQ. Residues 201 to 457 form the NR LBD domain; the sequence is QLKNSMDRRR…DALSKSLLTL (257 aa).

This sequence belongs to the nuclear hormone receptor family.

It is found in the nucleus. Its function is as follows. Orphan nuclear receptor. This chain is Nuclear hormone receptor family member nhr-20 (nhr-20), found in Caenorhabditis elegans.